Here is a 69-residue protein sequence, read N- to C-terminus: Conotoxin SIVA (69 aa).

Positions 1–21 (MGMRMMFTVFLLVVLATTVVS) are cleaved as a signal peptide. Positions 22–38 (TPSDRASDGRNAAVHER) are excised as a propeptide. Pyrrolidone carboxylic acid is present on Gln-39. An O-linked (HexNAc...) serine glycan is attached at Ser-45. 4-hydroxyproline is present on residues Pro-55, Pro-60, and Pro-61. Cys-68 carries the post-translational modification Cysteine amide.

Belongs to the conotoxin A superfamily. In terms of processing, contains 3 disulfide bonds. O-linked glycan consists of Hex3-HexNAc2 pentasaccharide. In terms of tissue distribution, expressed by the venom duct.

It localises to the secreted. Its function is as follows. Neurotoxin with probable activity on sodium channel. Induces intense repetitive firing of the frog neuromuscular junction, leading to a tetanic contracture in muscle fiber (spastic paralysis). In vivo, shows the same effect as the whole venom when injected on fish. Intraperitoneal injection into fish induces a period of rapid swimming followed by a spastic paralysis with stiff fibrillating fins. At high doses, the peptide is lethal to both fish and mice. The polypeptide is Conotoxin SIVA (Conus striatus (Striated cone)).